A 1060-amino-acid polypeptide reads, in one-letter code: RNA-binding protein 27 (1060 aa).

Disordered stretches follow at residues 80–143, 160–278, and 319–416; these read PLEP…DGKW, YDWR…PKRR, and PPPG…PPPL. Composition is skewed to basic and acidic residues over residues 84 to 102 and 124 to 143; these read VKPE…KEEV and SRSE…DGKW. The segment covering 165-185 has biased composition (basic residues); sequence GRSKSRSKSRGLSRSRSRSRG. Over residues 186-211 the composition is skewed to basic and acidic residues; it reads RSKDRDPNRNVEHRERSKFKSERNDL. Composition is skewed to low complexity over residues 225–235 and 255–268; these read SSEQYSSGAQS and SWSN…SSNS. A C3H1-type zinc finger spans residues 273–301; it reads PPPKRRCRDYDERGFCVLGDLCQFDHGND. 2 stretches are compositionally biased toward pro residues: residues 319–356 and 371–384; these read PPPG…PGPG and QPPP…PRPP. Over residues 387-402 the composition is skewed to polar residues; that stretch reads QSSLINSRDQPGTSAV. Threonine 447 carries the post-translational modification Phosphothreonine. Arginine 455 carries the post-translational modification Omega-N-methylarginine. The disordered stretch occupies residues 572–594; sequence LTKKPWLGKQGNNNQSKPGFLRK. Residues 600–674 form the RRM domain; sequence TKLEVKKIPQ…RFIRVLWHRE (75 aa). Positions 754–775 are disordered; that stretch reads HASTNQSDTSHLLNQTGGSSGE. Positions 755–770 are enriched in polar residues; sequence ASTNQSDTSHLLNQTG. Residues 810–887 are a coiled coil; it reads VQEVLKKKQE…KDELKTSSTV (78 aa). Serine 928 carries the phosphoserine modification. The segment at 943 to 982 is disordered; that stretch reads GRGKTISSQGRGRGRGRGRGRGSLNHMVVDHRPKALPGGG. Serine 1012 and serine 1020 each carry phosphoserine. The disordered stretch occupies residues 1014–1060; sequence HKPKVPSISTETEEEEVKEEETETSDLFLHDDDDEDEDEYESRSWRR. Acidic residues-rich tracts occupy residues 1024 to 1037 and 1044 to 1053; these read ETEE…ETET and DDDDEDEDEY.

The protein resides in the cytoplasm. Its subcellular location is the nucleus speckle. Functionally, may be involved in the turnover of nuclear polyadenylated (pA+) RNA. This chain is RNA-binding protein 27, found in Mus musculus (Mouse).